We begin with the raw amino-acid sequence, 380 residues long: Cytochrome b (380 aa).

The next 4 helical transmembrane spans lie at Phe34 to Met54, Trp78 to Ile99, Trp114 to Leu134, and Phe179 to Thr199. 2 residues coordinate heme b: His84 and His98. Positions 183 and 197 each coordinate heme b. Residue His202 coordinates a ubiquinone. Helical transmembrane passes span Leu227–Ser247, Leu289–His309, Ile321–Ser341, and Phe348–Pro368.

The protein belongs to the cytochrome b family. In terms of assembly, the cytochrome bc1 complex contains 11 subunits: 3 respiratory subunits (MT-CYB, CYC1 and UQCRFS1), 2 core proteins (UQCRC1 and UQCRC2) and 6 low-molecular weight proteins (UQCRH/QCR6, UQCRB/QCR7, UQCRQ/QCR8, UQCR10/QCR9, UQCR11/QCR10 and a cleavage product of UQCRFS1). This cytochrome bc1 complex then forms a dimer. The cofactor is heme b.

Its subcellular location is the mitochondrion inner membrane. In terms of biological role, component of the ubiquinol-cytochrome c reductase complex (complex III or cytochrome b-c1 complex) that is part of the mitochondrial respiratory chain. The b-c1 complex mediates electron transfer from ubiquinol to cytochrome c. Contributes to the generation of a proton gradient across the mitochondrial membrane that is then used for ATP synthesis. The protein is Cytochrome b (MT-CYB) of Pachyptila turtur (Fairy prion).